The primary structure comprises 241 residues: Glucosamine-6-phosphate deaminase (241 aa).

D67 (proton acceptor; for enolization step) is an active-site residue. The active-site For ring-opening step is N136. H138 acts as the Proton acceptor; for ring-opening step in catalysis. The active-site For ring-opening step is the E143.

It belongs to the glucosamine/galactosamine-6-phosphate isomerase family. NagB subfamily.

The enzyme catalyses alpha-D-glucosamine 6-phosphate + H2O = beta-D-fructose 6-phosphate + NH4(+). Its pathway is amino-sugar metabolism; N-acetylneuraminate degradation; D-fructose 6-phosphate from N-acetylneuraminate: step 5/5. Functionally, catalyzes the reversible isomerization-deamination of glucosamine 6-phosphate (GlcN6P) to form fructose 6-phosphate (Fru6P) and ammonium ion. This is Glucosamine-6-phosphate deaminase from Halothermothrix orenii (strain H 168 / OCM 544 / DSM 9562).